A 712-amino-acid polypeptide reads, in one-letter code: Methionine--tRNA ligase (712 aa).

A 'HIGH' region motif is present at residues P20 to H30. Zn(2+) is bound by residues C151, C154, C163, and C167. Residues K334–T338 carry the 'KMSKS' region motif. ATP is bound at residue K337. Positions A559 to A585 are disordered. Residues D610–R712 form the tRNA-binding domain.

This sequence belongs to the class-I aminoacyl-tRNA synthetase family. MetG type 1 subfamily. Homodimer. Zn(2+) serves as cofactor.

Its subcellular location is the cytoplasm. It carries out the reaction tRNA(Met) + L-methionine + ATP = L-methionyl-tRNA(Met) + AMP + diphosphate. Is required not only for elongation of protein synthesis but also for the initiation of all mRNA translation through initiator tRNA(fMet) aminoacylation. In Methanosarcina acetivorans (strain ATCC 35395 / DSM 2834 / JCM 12185 / C2A), this protein is Methionine--tRNA ligase.